The following is a 1076-amino-acid chain: Vacuolar membrane protease (1076 aa).

At 1–11 (MKCYNPSAFVP) the chain is on the cytoplasmic side. Residues 12–32 (MAVTLVTVVIYLGVFIPLLII) traverse the membrane as a helical segment. Residues 33–437 (HETVPSAPDD…TVFAVFRLRT (405 aa)) are Vacuolar-facing. 3 N-linked (GlcNAc...) asparagine glycosylation sites follow: Asn-50, Asn-99, and Asn-156. The Zn(2+) site is built by His-220 and Asp-232. Glu-266 functions as the Proton acceptor in the catalytic mechanism. The Zn(2+) site is built by Glu-267, Glu-292, and His-364. The helical transmembrane segment at 438–458 (LFAWSLTLLIASPLILFAVSY) threads the bilayer. The Cytoplasmic segment spans residues 459–491 (LLNRQEKFYFFAGSIKSKNPEDEPISLGGWRGA). The chain crosses the membrane as a helical span at residues 492 to 512 (FRFPITLFITSAITFACASLI). Over 513-525 (NKINPMIIYSSPY) the chain is Vacuolar. Residues 526–546 (AVWSMSATLFFSVFWFIMAGC) traverse the membrane as a helical segment. Residues 547 to 556 (NFVRPSALQR) are Cytoplasmic-facing. Residues 557–577 (GYAFMWMFVFGWILLVVATVY) traverse the membrane as a helical segment. Topologically, residues 578–584 (EDRFKIS) are vacuolar. The helical transmembrane segment at 585-605 (GGYLFVFYEAAIFLATLIAIC) threads the bilayer. The Cytoplasmic portion of the chain corresponds to 606–738 (EQFALPRKST…LPIWTWLVQY (133 aa)). Disordered regions lie at residues 619-662 (DSQN…EETV) and 701-720 (SYDG…HPYG). The span at 621-632 (QNDHSDNQDHHH) shows a compositional bias: basic and acidic residues. Residues 647–660 (PNADDEAAEEDQEE) show a composition bias toward acidic residues. A helical transmembrane segment spans residues 739 to 759 (LLVGPFILVILGQVGLFLVAA). The Vacuolar portion of the chain corresponds to 760-771 (LHQTGTDGSPLF). The chain crosses the membrane as a helical span at residues 772–792 (LPYLIVAIFSILLLLPVTPFI). Residues 793–799 (HRLTHHM) are Cytoplasmic-facing. A helical transmembrane segment spans residues 800 to 820 (PTFFFLVFIGTLIYNLVAFPF). Residues 821–1076 (SPNNRYKAYF…LGLAFLLAYV (256 aa)) are Vacuolar-facing. The N-linked (GlcNAc...) asparagine glycan is linked to Asn-912.

Belongs to the peptidase M28 family. Zn(2+) is required as a cofactor.

The protein resides in the vacuole membrane. Functionally, may be involved in vacuolar sorting and osmoregulation. The chain is Vacuolar membrane protease from Sclerotinia sclerotiorum (strain ATCC 18683 / 1980 / Ss-1) (White mold).